The primary structure comprises 48 residues: ATP synthase protein 8 (48 aa).

Residues 16–36 (GFLLMTILLVLFSQFFLPMIL) traverse the membrane as a helical segment.

This sequence belongs to the ATPase protein 8 family. F-type ATPases have 2 components, CF(1) - the catalytic core - and CF(0) - the membrane proton channel.

It is found in the mitochondrion membrane. Functionally, mitochondrial membrane ATP synthase (F(1)F(0) ATP synthase or Complex V) produces ATP from ADP in the presence of a proton gradient across the membrane which is generated by electron transport complexes of the respiratory chain. F-type ATPases consist of two structural domains, F(1) - containing the extramembraneous catalytic core and F(0) - containing the membrane proton channel, linked together by a central stalk and a peripheral stalk. During catalysis, ATP synthesis in the catalytic domain of F(1) is coupled via a rotary mechanism of the central stalk subunits to proton translocation. Part of the complex F(0) domain. Minor subunit located with subunit a in the membrane. This is ATP synthase protein 8 (ATP8) from Vanderwaltozyma polyspora (strain ATCC 22028 / DSM 70294 / BCRC 21397 / CBS 2163 / NBRC 10782 / NRRL Y-8283 / UCD 57-17) (Kluyveromyces polysporus).